The sequence spans 354 residues: 3'-5' exonuclease (354 aa).

Residues 1 to 120 (MERYLTKMPI…PSPEKEKPEK (120 aa)) form a disordered region. Positions 13–50 (KANEVPKKEAFAKKETPKVARKATKTDTPKELKDKENA) are enriched in basic and acidic residues. The span at 59–70 (TKGRPGRPAAKR) shows a compositional bias: basic residues. Over residues 71–91 (KNLDTPDVKDEKIAMEEENPP) the composition is skewed to basic and acidic residues. 3 positions are modified to phosphoserine: S104, S110, and S112. The region spanning 149–314 (WVEKQKDDVV…GQVIYRELER (166 aa)) is the 3'-5' exonuclease domain. D163, E165, and D301 together coordinate Mg(2+).

The protein belongs to the WRNexo family.

It localises to the nucleus. Has exonuclease activity on both single-stranded and duplex templates bearing overhangs, but not blunt ended duplex DNA, and cleaves in a 3'-5' direction. Essential for the formation of DNA replication focal centers. Has an important role in maintaining genome stability. The sequence is that of 3'-5' exonuclease from Drosophila sechellia (Fruit fly).